A 242-amino-acid chain; its full sequence is Ribonuclease PH (242 aa).

Phosphate contacts are provided by residues Arg87 and Gly125–Arg127.

This sequence belongs to the RNase PH family. In terms of assembly, homohexameric ring arranged as a trimer of dimers.

It catalyses the reaction tRNA(n+1) + phosphate = tRNA(n) + a ribonucleoside 5'-diphosphate. Phosphorolytic 3'-5' exoribonuclease that plays an important role in tRNA 3'-end maturation. Removes nucleotide residues following the 3'-CCA terminus of tRNAs; can also add nucleotides to the ends of RNA molecules by using nucleoside diphosphates as substrates, but this may not be physiologically important. Probably plays a role in initiation of 16S rRNA degradation (leading to ribosome degradation) during starvation. The chain is Ribonuclease PH from Thermosynechococcus vestitus (strain NIES-2133 / IAM M-273 / BP-1).